The chain runs to 150 residues: Large ribosomal subunit protein bL9 (150 aa).

It belongs to the bacterial ribosomal protein bL9 family.

Functionally, binds to the 23S rRNA. This chain is Large ribosomal subunit protein bL9, found in Pectobacterium atrosepticum (strain SCRI 1043 / ATCC BAA-672) (Erwinia carotovora subsp. atroseptica).